Reading from the N-terminus, the 467-residue chain is Heat shock factor protein 3 (467 aa).

The DNA-binding element occupies 16-121 (VPGFLAKLWA…LLENIKRKVS (106 aa)). The hydrophobic repeat HR-A/B stretch occupies residues 128–201 (LKVCAEDLHK…LSLMRGNYIV (74 aa)). Residues 364–389 (IQDFLNCIDASLEELQAMLSGKQYSF) form a hydrophobic repeat HR-C region. Residues 427 to 449 (EDLGASERETAGSKGGQEGTESC) form a disordered region.

The protein belongs to the HSF family. In terms of assembly, homotrimer. In terms of tissue distribution, expressed in most tissues. High levels are found in erythrocytes and low levels in liver.

It localises to the cytoplasm. The protein localises to the nucleus. DNA-binding protein that specifically binds heat shock promoter elements (HSE) and activates transcription. HSF3 binds DNA constitutively only when the C-terminal region is deleted. This Gallus gallus (Chicken) protein is Heat shock factor protein 3 (HSF3).